The following is a 391-amino-acid chain: Homocysteine-responsive endoplasmic reticulum-resident ubiquitin-like domain member 1 protein (391 aa).

Met1 is modified (N-acetylmethionine). Residues Met1–Asp263 are Cytoplasmic-facing. The Ubiquitin-like domain occupies Val10–Leu72. The disordered stretch occupies residues Lys100 to Arg126. Polar residues predominate over residues Asn112–Gly124. Residues Gln115–Ser200 form an interaction with UBQLN1 region. At Ser135 the chain carries Phosphoserine. Residues Trp264–Tyr284 form a helical membrane-spanning segment. The Lumenal segment spans residues Ser285 to Arg289. The helical transmembrane segment at Phe290–Phe310 threads the bilayer. The Cytoplasmic segment spans residues Arg311–Asn391. Residues Phe318–Gly359 are disordered. Positions Asp346–Leu357 are enriched in basic and acidic residues.

As to quaternary structure, interacts with PSEN1 and PSEN2. Interacts with UBXN6. Interacts with UBQLN1, UBQLN2 and UBQLN4. Component of the HRD1 complex, which comprises at least SYNV1/HRD1, FAM8A1, HERPUD1/HERP, OS9, SEL1L and UBE2J1. FAM8A1 binding to SYNV1 may promote recruitment of HERPUD1 to the HRD1 complex.

It localises to the endoplasmic reticulum membrane. Its function is as follows. Component of the endoplasmic reticulum quality control (ERQC) system also called ER-associated degradation (ERAD) involved in ubiquitin-dependent degradation of misfolded endoplasmic reticulum proteins. Binds to ubiquilins and this interaction is required for efficient degradation of CD3D via the ERAD pathway. The protein is Homocysteine-responsive endoplasmic reticulum-resident ubiquitin-like domain member 1 protein (HERPUD1) of Pongo abelii (Sumatran orangutan).